The chain runs to 272 residues: MLELQRLTKTYATGDTALREVSLAVPRGQVVGLIGPSGAGKSTLIRCINRLVAPSGGRILLGDVDLAAVGRAELRRQRRRIGMIFQEYALVERLTVMENVLSGRLGYVPFWRSFTRRFPGRDIENAYRLLDRVGLLAHADKRADALSGGQRQRVGIARALAQEPALLLVDEPTASLDPKTSRQIMRLILEVCEERDLPAIVNIHDVPLAQQFMHRLVGLHAGEVVFDGAPVALDETVLATIYGAEDWASSGREPAPEREPEDTERHLAEVGR.

An ABC transporter domain is found at 2 to 246 (LELQRLTKTY…VLATIYGAED (245 aa)). 35–42 (GPSGAGKS) is a binding site for ATP. The segment at 248–272 (ASSGREPAPEREPEDTERHLAEVGR) is disordered. Basic and acidic residues predominate over residues 254 to 272 (PAPEREPEDTERHLAEVGR).

The protein belongs to the ABC transporter superfamily. Phosphonates importer (TC 3.A.1.9.1) family. In terms of assembly, the complex is composed of two ATP-binding proteins (PhnC), two transmembrane proteins (PhnE) and a solute-binding protein (PhnD).

Its subcellular location is the cell inner membrane. It carries out the reaction phosphonate(out) + ATP + H2O = phosphonate(in) + ADP + phosphate + H(+). Functionally, part of the ABC transporter complex PhnCDE involved in phosphonates import. Responsible for energy coupling to the transport system. The sequence is that of Phosphonates import ATP-binding protein PhnC from Chromohalobacter salexigens (strain ATCC BAA-138 / DSM 3043 / CIP 106854 / NCIMB 13768 / 1H11).